Consider the following 145-residue polypeptide: 3-hydroxyacyl-[acyl-carrier-protein] dehydratase FabZ (145 aa).

H49 is a catalytic residue.

It belongs to the thioester dehydratase family. FabZ subfamily.

The protein localises to the cytoplasm. The catalysed reaction is a (3R)-hydroxyacyl-[ACP] = a (2E)-enoyl-[ACP] + H2O. Its function is as follows. Involved in unsaturated fatty acids biosynthesis. Catalyzes the dehydration of short chain beta-hydroxyacyl-ACPs and long chain saturated and unsaturated beta-hydroxyacyl-ACPs. This Ehrlichia ruminantium (strain Welgevonden) protein is 3-hydroxyacyl-[acyl-carrier-protein] dehydratase FabZ.